Here is a 412-residue protein sequence, read N- to C-terminus: P-selectin glycoprotein ligand 1 (412 aa).

An N-terminal signal peptide occupies residues 1-17 (MPLQLLLLLILLGPGNS). A propeptide spanning residues 18–41 (LQLWDTWADEAEKALGPLLARDRR) is cleaved from the precursor. The Extracellular segment spans residues 18–320 (LQLWDTWADE…APDHISVKQC (303 aa)). The residue at position 42 (Q42) is a Pyrrolidone carboxylic acid. Y46, Y48, and Y51 each carry sulfotyrosine. Positions 56-95 (ETEPPEMLRNSTDTTPLTGPGTPESTTVEPAARRSTGLDA) are disordered. The O-linked (GalNAc...) threonine glycan is linked to T57. N65 is a glycosylation site (N-linked (GlcNAc...) asparagine). The span at 66 to 82 (STDTTPLTGPGTPESTT) shows a compositional bias: low complexity. Residue N111 is glycosylated (N-linked (GlcNAc...) asparagine). 12 consecutive repeat copies span residues 122 to 131 (QTTQPAATEA), 132 to 141 (QTTQPVPTEA), 142 to 151 (QTTPLAATEA), 162 to 171 (QTTPLAATEA), 182 to 191 (QTTQPTGLEA), 192 to 201 (QTTAPAAMEA), 202 to 211 (QTTAPAAMEA), 212 to 221 (QTTPPAAMEA), 222 to 231 (QTTQTTAMEA), 232 to 241 (QTTAPEATEA), 242 to 251 (QTTQPTATEA), and 252 to 261 (QTTPLAAMEA). The segment at 122-261 (QTTQPAATEA…QTTPLAAMEA (140 aa)) is 12 X 10 AA tandem repeats. 2 disordered regions span residues 125–146 (QPAATEAQTTQPVPTEAQTTPL) and 166–252 (LAAT…TEAQ). A glycan (N-linked (GlcNAc...) asparagine) is linked at N302. A helical membrane pass occupies residues 321 to 341 (LLAILILALVATIFFVCTVVL). The Cytoplasmic portion of the chain corresponds to 342–412 (AVRLSRKGHM…DDLTLHSFLP (71 aa)). A disordered region spans residues 374 to 412 (EGPSATANGGLSKAKSPGLTPEPREDREGDDLTLHSFLP). Residues 395-406 (EPREDREGDDLT) are compositionally biased toward basic and acidic residues. A Phosphothreonine modification is found at T406. S409 is subject to Phosphoserine.

As to quaternary structure, homodimer; disulfide-linked. Interaction with P-, E- and L-selectins, through their lectin/EGF domains, is required for promoting recruitment and rolling of leukocytes. These interactions require sialyl Lewis X glycan modification but there is a differing dependence for tyrosine sulfations. Sulfation on Tyr-51 of PSGL1 is most important for high affinity L-selectin/SELL binding while P-selectin/SELP requires sulfation on Tyr-48. E-selectin/SELE binds with much lower affinity and requires the sLe(x) epitope, but apparently not tyrosine sulfation. Dimerization appears not to be required for P-selectin/SELP binding. Interacts with SNX20. Interacts with MSN and SYK; mediates the activation of SYK by SELPLG. Interacts with HAVCR1. In terms of assembly, (Microbial infection) Interacts with enterovirus 71 capsid proteins. (Microbial infection) Interacts with Staphylococcus aureus proteins SSL5 and SSL11; these interactions prevent SELPLG-mediated neutrophil rolling. Post-translationally, displays complex, core-2, sialylated and fucosylated O-linked oligosaccharides, at least some of which appear to contain poly-N-acetyllactosamine with varying degrees of substitution. Mainly disialylated or neutral forms of the core-2 tetrasaccharide, Galbeta1--&gt;4GlcNAcbeta1--&gt;6(Galbeta1--&gt;3)GalNAcOH. The GlcN:GalN ratio is approximately 2:1 and the Man:Fuc ratio 3:5. Contains about 14% fucose with alpha-1,3 linkage present in two forms: One species is a disialylated, monofucosylated glycan, and the other, a monosialylated, trifucosylated glycan with a polylactosamine backbone. The fucosylated forms carry the Lewis antigen and are important for interaction with selectins and for functioning in leukocyte rolling. The modification containing the sialyl Lewis X glycan is on Thr-57. No sulfated O-glycans. Some N-glycosylation. Sulfation, in conjunction with the SLe(x)-containing glycan, is necessary for P- and L-selectin binding. High affinity P-selectin binding has a preferred requirement for the isomer sulfated on both Tyr-48 and Tyr-51, whereas L-selectin binding requires predominantly sulfation on Tyr-51 with sulfation on Tyr-48 playing only a minor role. These sulfations play an important role in L- and P-selectin-mediated neutrophil recruitment, and leukocyte rolling. In terms of tissue distribution, expressed on neutrophils, monocytes and most lymphocytes.

The protein resides in the membrane. Functionally, a SLe(x)-type proteoglycan, which through high affinity, calcium-dependent interactions with E-, P- and L-selectins, mediates rapid rolling of leukocytes over vascular surfaces during the initial steps in inflammation. Critical for the initial leukocyte capture. (Microbial infection) Acts as a receptor for enterovirus 71. In Homo sapiens (Human), this protein is P-selectin glycoprotein ligand 1 (SELPLG).